The chain runs to 358 residues: MTIKIAIDCMGGDHGVSVTVPAAISFLASHDDAAVVLVGLPDAIQAQLKKLRAQDHPRVSVVPATEVITMDDPVEVALRKKKDSSMRVAVTQVKEGLAGACISAGNTGALMAVSRYVLKTLEGIERPAIATTIPNEQGWGTTVLDLGANADCEPEHLLQFARMAEAMVAVVDHKEHPTVGLLNIGEEVIKGNEVVKRAGELLRASELNFHGNVEGNDIFKGTTDIVVCDGFVGNVALKSTEGLAKMIGGMIKEEFTRSWFTKLLAGIAMPVLSRLAKRLDPARYNGASLLGLRGLVIKSHGSADAHSFEWAIKRGYDAAKNGVIERIARAFADKTSAAGAAPASPETAPTPHPSTRAA.

A disordered region spans residues 336–358; sequence SAAGAAPASPETAPTPHPSTRAA.

The protein belongs to the PlsX family. In terms of assembly, homodimer. Probably interacts with PlsY.

The protein localises to the cytoplasm. It carries out the reaction a fatty acyl-[ACP] + phosphate = an acyl phosphate + holo-[ACP]. Its pathway is lipid metabolism; phospholipid metabolism. Functionally, catalyzes the reversible formation of acyl-phosphate (acyl-PO(4)) from acyl-[acyl-carrier-protein] (acyl-ACP). This enzyme utilizes acyl-ACP as fatty acyl donor, but not acyl-CoA. The chain is Phosphate acyltransferase from Cupriavidus pinatubonensis (strain JMP 134 / LMG 1197) (Cupriavidus necator (strain JMP 134)).